The primary structure comprises 258 residues: TLC domain-containing protein 4 A (258 aa).

7 helical membrane-spanning segments follow: residues 8-28 (YLISVEPLGFILYYTSLYIWI), 49-71 (IEWTNKIVATISSIVSFSLSCYC), 92-112 (FILKFISFYFLFDALHLIIYY), 118-138 (WPIIIHHLVVGILSYVYIGLY), 144-164 (LTLLYFLLFEITNPFIHMKWF), 170-190 (LENHILYSINGFMMAFFFIFI), and 217-237 (IIFFCFPIITILNLFWTYLVI). Residues 46-245 (SSKIEWTNKI…VIKGILKHLS (200 aa)) enclose the TLC domain.

The protein belongs to the TLCD4 family.

It is found in the membrane. This is TLC domain-containing protein 4 A (tlcd4a) from Dictyostelium discoideum (Social amoeba).